A 269-amino-acid chain; its full sequence is Undecaprenyl-diphosphatase (269 aa).

A run of 8 helical transmembrane segments spans residues 3 to 23 (LLIKAFIMGIVEGLTEFLPIS), 41 to 61 (FATMFEIVIQLGAILAVVFYY), 78 to 98 (GFNLWFKIFIAFIPAAVIGLL), 107 to 127 (LFSPFTVAIALIAGAIMMIVI), 148 to 167 (SLLIGIAQVMSLFPGMSRSA), 184 to 204 (AEFSFFLAIPTMFAATTLSLL), 213 to 233 (LEWQALAVGFITSFLTALFVV), and 248 to 268 (FAYYRLAVGVLMILLVAEKIV).

It belongs to the UppP family.

Its subcellular location is the cell membrane. The enzyme catalyses di-trans,octa-cis-undecaprenyl diphosphate + H2O = di-trans,octa-cis-undecaprenyl phosphate + phosphate + H(+). In terms of biological role, catalyzes the dephosphorylation of undecaprenyl diphosphate (UPP). Confers resistance to bacitracin. This is Undecaprenyl-diphosphatase from Thermoanaerobacter sp. (strain X514).